Here is a 185-residue protein sequence, read N- to C-terminus: CASP-like protein 2C1 (185 aa).

Topologically, residues 1–12 (MVAARVSEVKAE) are cytoplasmic. The helical transmembrane segment at 13–33 (GVLRGACAALAAAAALLVGLS) threads the bilayer. Residues 34-52 (TQTETVLLVRKKATVKDVQ) lie on the Extracellular side of the membrane. Residues 53–73 (ALWVLAMAAAAAAGYHLLQLL) traverse the membrane as a helical segment. At 74 to 105 (KCFYLGRRVGGGASPCRRSSRALAWTCLLLDK) the chain is on the cytoplasmic side. A helical transmembrane segment spans residues 106-126 (ACAYTTFATTVAAAQACVIAL). Topologically, residues 127-147 (DGAHALQWTKLCNIYTRFCEQ) are extracellular. A helical transmembrane segment spans residues 148 to 168 (IAGSLVLGMLAAVGTAVLSAA). The Cytoplasmic portion of the chain corresponds to 169–185 (SARNVFRHYSPGTYAAH).

It belongs to the Casparian strip membrane proteins (CASP) family. Homodimer and heterodimers.

It is found in the cell membrane. This chain is CASP-like protein 2C1, found in Sorghum bicolor (Sorghum).